The sequence spans 516 residues: Probable cyclic di-GMP phosphodiesterase PdeB (516 aa).

The next 2 helical transmembrane spans lie at 6 to 26 and 242 to 262; these read LVGLISGVLILSVLLPVGLSI and QVFIWLPLGLVIGLLAAMFVL. One can recognise an EAL domain in the interval 268-516; sequence IQSPHHRLQD…DFLRWAEQHL (249 aa).

The protein resides in the cell inner membrane. It carries out the reaction 3',3'-c-di-GMP + H2O = 5'-phosphoguanylyl(3'-&gt;5')guanosine + H(+). Phosphodiesterase (PDE) that catalyzes the hydrolysis of cyclic-di-GMP (c-di-GMP) to 5'-pGpG. The polypeptide is Probable cyclic di-GMP phosphodiesterase PdeB (Escherichia coli (strain K12)).